The following is a 234-amino-acid chain: Large ribosomal subunit protein uL1 (234 aa).

Belongs to the universal ribosomal protein uL1 family. In terms of assembly, part of the 50S ribosomal subunit.

Functionally, binds directly to 23S rRNA. The L1 stalk is quite mobile in the ribosome, and is involved in E site tRNA release. Its function is as follows. Protein L1 is also a translational repressor protein, it controls the translation of the L11 operon by binding to its mRNA. The protein is Large ribosomal subunit protein uL1 of Anaeromyxobacter dehalogenans (strain 2CP-1 / ATCC BAA-258).